The following is a 208-amino-acid chain: Uracil phosphoribosyltransferase (208 aa).

5-phospho-alpha-D-ribose 1-diphosphate is bound by residues arginine 78, arginine 103, and 130–138; that span reads DPMLATGGS. Residues isoleucine 193 and 198-200 contribute to the uracil site; that span reads GDA. Position 199 (aspartate 199) interacts with 5-phospho-alpha-D-ribose 1-diphosphate.

The protein belongs to the UPRTase family. The cofactor is Mg(2+).

The catalysed reaction is UMP + diphosphate = 5-phospho-alpha-D-ribose 1-diphosphate + uracil. The protein operates within pyrimidine metabolism; UMP biosynthesis via salvage pathway; UMP from uracil: step 1/1. Allosterically activated by GTP. Its function is as follows. Catalyzes the conversion of uracil and 5-phospho-alpha-D-ribose 1-diphosphate (PRPP) to UMP and diphosphate. The polypeptide is Uracil phosphoribosyltransferase (Haemophilus influenzae (strain PittEE)).